Here is a 171-residue protein sequence, read N- to C-terminus: Secretion monitor (171 aa).

The N-terminal stretch at 1–30 is a signal peptide; the sequence is MIGILNRWRQFGRRYFWPHLLLGMVAASLG.

Belongs to the SecM family.

It localises to the cytoplasm. The protein resides in the cytosol. The protein localises to the periplasm. Regulates secA expression by translational coupling of the secM secA operon. Translational pausing at a specific Pro residue 5 residues before the end of the protein may allow disruption of a mRNA repressor helix that normally suppresses secA translation initiation. This is Secretion monitor from Pectobacterium atrosepticum (strain SCRI 1043 / ATCC BAA-672) (Erwinia carotovora subsp. atroseptica).